Reading from the N-terminus, the 357-residue chain is 3-isopropylmalate dehydrogenase (357 aa).

76–89 (GPKWDNEPSHNRPE) lines the NAD(+) pocket. Residues Arg96, Arg106, Arg135, and Asp223 each contribute to the substrate site. Mg(2+) contacts are provided by Asp223, Asp247, and Asp251. 281–293 (GSAPDIAGQDKAN) serves as a coordination point for NAD(+).

Belongs to the isocitrate and isopropylmalate dehydrogenases family. LeuB type 1 subfamily. As to quaternary structure, homodimer. The cofactor is Mg(2+). Requires Mn(2+) as cofactor.

It localises to the cytoplasm. It carries out the reaction (2R,3S)-3-isopropylmalate + NAD(+) = 4-methyl-2-oxopentanoate + CO2 + NADH. Its pathway is amino-acid biosynthesis; L-leucine biosynthesis; L-leucine from 3-methyl-2-oxobutanoate: step 3/4. Catalyzes the oxidation of 3-carboxy-2-hydroxy-4-methylpentanoate (3-isopropylmalate) to 3-carboxy-4-methyl-2-oxopentanoate. The product decarboxylates to 4-methyl-2 oxopentanoate. The polypeptide is 3-isopropylmalate dehydrogenase (Helicobacter hepaticus (strain ATCC 51449 / 3B1)).